A 956-amino-acid chain; its full sequence is Glutamate receptor ionotropic, kainate 4 (956 aa).

The N-terminal stretch at 1–20 is a signal peptide; that stretch reads MPRVSAPLVLLPAWLLMVAC. At 21–545 the chain is on the extracellular side; the sequence is SPHSLRIAAI…YFSSLDPFSP (525 aa). Residues Asn-158, Asn-220, Asn-272, Asn-286, Asn-323, Asn-408, Asn-415, and Asn-479 are each glycosylated (N-linked (GlcNAc...) asparagine). Positions 500, 502, and 507 each coordinate L-glutamate. Residues 546-566 form a helical membrane-spanning segment; sequence GVWLFMLLAYLAVSCVLFLVA. Topologically, residues 567-623 are cytoplasmic; it reads RLTPYEWYSPHPCAQGRCNLLVNQYSLGNSLWFPVGGFMQQGSTIAPRALSTRCVSG. Residues 624 to 644 traverse the membrane as a helical segment; it reads VWWAFTLIIISSYTANLAAFL. The Extracellular segment spans residues 645 to 804; the sequence is TVQRMEVPIE…HRAKGLGMEN (160 aa). L-glutamate-binding residues include Ser-674, Ser-675, and Glu-723. Asn-736 carries N-linked (GlcNAc...) asparagine glycosylation. Residues 805–825 traverse the membrane as a helical segment; sequence IGGIFVVLICGLIVAIFMAML. Over 826–956 the chain is Cytoplasmic; the sequence is EFLWTLRHSE…DKTTNSSEPE (131 aa). The disordered stretch occupies residues 931–956; sequence LRARPSPARSEESLEWDKTTNSSEPE. The segment covering 939-948 has biased composition (basic and acidic residues); it reads RSEESLEWDK.

The protein belongs to the glutamate-gated ion channel (TC 1.A.10.1) family. GRIK4 subfamily. In terms of assembly, homodimer. Can form functional heteromeric receptors with GRIK1, GRIK2 and GRIK3. In terms of tissue distribution, strong expression in hippocampal CA3 pyramidal cells. Low expression in hippocampal dentate granule cells, in layers II, V and VI of the cortex, and in cerebellar Purkinje cells. No expression in the striatum, reticular thalamus, hypothalamus or amygdaloid complex.

Its subcellular location is the cell membrane. The protein resides in the postsynaptic cell membrane. It is found in the presynaptic cell membrane. Ionotropic glutamate receptor that functions as a cation-permeable ligand-gated ion channel, gated by L-glutamate and the glutamatergic agonist kainic acid. Cannot form functional channels on its own and shows channel activity only in heteromeric assembly with GRIK1, GRIK2 and GRIK3 subunits. The chain is Glutamate receptor ionotropic, kainate 4 (Grik4) from Rattus norvegicus (Rat).